The following is a 303-amino-acid chain: Monoglyceride lipase (303 aa).

Thr-10 bears the Phosphothreonine mark. 3'-nitrotyrosine is present on Tyr-58. Ser-122 (nucleophile) is an active-site residue. Catalysis depends on charge relay system residues Asp-239 and His-269.

The protein belongs to the AB hydrolase superfamily. Monoacylglycerol lipase family. Homodimer. As to expression, detected in adipose tissue, lung, liver, kidney, brain and heart.

The protein localises to the cytoplasm. Its subcellular location is the cytosol. The protein resides in the membrane. It catalyses the reaction Hydrolyzes glycerol monoesters of long-chain fatty acids.. It carries out the reaction a 1-acylglycerol + H2O = glycerol + a fatty acid + H(+). The catalysed reaction is a 2-acylglycerol + H2O = glycerol + a fatty acid + H(+). The enzyme catalyses 1-octanoylglycerol + H2O = octanoate + glycerol + H(+). It catalyses the reaction 2-(5Z,8Z,11Z,14Z-eicosatetraenoyl)-glycerol + H2O = glycerol + (5Z,8Z,11Z,14Z)-eicosatetraenoate + H(+). It carries out the reaction 1-decanoylglycerol + H2O = decanoate + glycerol + H(+). The catalysed reaction is 1-dodecanoylglycerol + H2O = dodecanoate + glycerol + H(+). The enzyme catalyses 1-tetradecanoylglycerol + H2O = tetradecanoate + glycerol + H(+). It catalyses the reaction 2-hexadecanoylglycerol + H2O = glycerol + hexadecanoate + H(+). It carries out the reaction 1-(9Z-octadecenoyl)-glycerol + H2O = glycerol + (9Z)-octadecenoate + H(+). The catalysed reaction is 2-(9Z-octadecenoyl)-glycerol + H2O = glycerol + (9Z)-octadecenoate + H(+). The enzyme catalyses 2-(9Z,12Z-octadecadienoyl)-glycerol + H2O = (9Z,12Z)-octadecadienoate + glycerol + H(+). It catalyses the reaction 1-(5Z,8Z,11Z,14Z-eicosatetraenoyl)-glycerol + H2O = glycerol + (5Z,8Z,11Z,14Z)-eicosatetraenoate + H(+). It carries out the reaction 1-(9Z,12Z-octadecadienoyl)-glycerol + H2O = (9Z,12Z)-octadecadienoate + glycerol + H(+). The catalysed reaction is 1-hexadecanoylglycerol + H2O = glycerol + hexadecanoate + H(+). The enzyme catalyses 1-octadecanoylglycerol + H2O = octadecanoate + glycerol + H(+). It catalyses the reaction prostaglandin E2 1-glyceryl ester + H2O = prostaglandin E2 + glycerol + H(+). It carries out the reaction prostaglandin D2-1-glycerol ester + H2O = prostaglandin D2 + glycerol + H(+). The catalysed reaction is 2-glyceryl-15-deoxy-Delta(12,14)-prostaglandin J2 + H2O = 15-deoxy-Delta(12,14)-prostaglandin J2 + glycerol + H(+). The enzyme catalyses prostaglandin F2alpha 1-glyceryl ester + H2O = prostaglandin F2alpha + glycerol + H(+). It participates in glycerolipid metabolism; triacylglycerol degradation. Its function is as follows. Converts monoacylglycerides to free fatty acids and glycerol. Hydrolyzes the endocannabinoid 2-arachidonoylglycerol, and thereby contributes to the regulation of endocannabinoid signaling, nociperception and perception of pain. Regulates the levels of fatty acids that serve as signaling molecules and promote cancer cell migration, invasion and tumor growth. This is Monoglyceride lipase from Homo sapiens (Human).